Here is a 417-residue protein sequence, read N- to C-terminus: uncharacterized protein (417 aa).

Disordered regions lie at residues 44–83 (FTNE…VRSR) and 325–346 (VQSA…PPKE). Low complexity predominate over residues 54–64 (SNYSTSGYDSS). Over residues 65-76 (AETISANSSPIN) the composition is skewed to polar residues. A compositionally biased stretch (basic residues) spans 326-339 (QSARKNQKKGRKNR). A helical membrane pass occupies residues 362–382 (FLIIGVYVLVFIYVCTNVLTV).

Its subcellular location is the membrane. This is an uncharacterized protein from Caenorhabditis elegans.